Reading from the N-terminus, the 334-residue chain is L-lactate dehydrogenase B chain (334 aa).

The residue at position 2 (Ala2) is an N-acetylalanine. N6-acetyllysine is present on Lys7. Phosphoserine is present on residues Ser11 and Ser44. NAD(+)-binding positions include Gly30 to Lys58 and Arg100. Position 58 is an N6-acetyllysine (Lys58). Arg107 provides a ligand contact to substrate. Lys119 carries the post-translational modification N6-acetyllysine. Residue Asn139 coordinates NAD(+). The substrate site is built by Asn139 and Arg170. His194 acts as the Proton acceptor in catalysis. Tyr240 carries the phosphotyrosine modification. Residue Thr249 coordinates substrate. Lys329 carries the N6-acetyllysine modification.

The protein belongs to the LDH/MDH superfamily. LDH family. In terms of assembly, homotetramer. Interacts with PTEN upstream reading frame protein MP31; the interaction leads to inhibition of mitochondrial lactate dehydrogenase activity, preventing conversion of lactate to pyruvate in mitochondria.

It localises to the cytoplasm. Its subcellular location is the mitochondrion inner membrane. It carries out the reaction (S)-lactate + NAD(+) = pyruvate + NADH + H(+). It participates in fermentation; pyruvate fermentation to lactate; (S)-lactate from pyruvate: step 1/1. Its function is as follows. Interconverts simultaneously and stereospecifically pyruvate and lactate with concomitant interconversion of NADH and NAD(+). The protein is L-lactate dehydrogenase B chain (Ldhb) of Mus musculus (Mouse).